The chain runs to 245 residues: 1-(5-phosphoribosyl)-5-[(5-phosphoribosylamino)methylideneamino] imidazole-4-carboxamide isomerase (245 aa).

Aspartate 8 (proton acceptor) is an active-site residue. Aspartate 129 functions as the Proton donor in the catalytic mechanism.

The protein belongs to the HisA/HisF family.

It localises to the cytoplasm. It carries out the reaction 1-(5-phospho-beta-D-ribosyl)-5-[(5-phospho-beta-D-ribosylamino)methylideneamino]imidazole-4-carboxamide = 5-[(5-phospho-1-deoxy-D-ribulos-1-ylimino)methylamino]-1-(5-phospho-beta-D-ribosyl)imidazole-4-carboxamide. The protein operates within amino-acid biosynthesis; L-histidine biosynthesis; L-histidine from 5-phospho-alpha-D-ribose 1-diphosphate: step 4/9. This Heliobacterium modesticaldum (strain ATCC 51547 / Ice1) protein is 1-(5-phosphoribosyl)-5-[(5-phosphoribosylamino)methylideneamino] imidazole-4-carboxamide isomerase.